The sequence spans 279 residues: Protein ABIL4 (279 aa).

Disordered regions lie at residues 192-211 and 219-241; these read VHNNINNRTPNKRSNSPMRF and LLKRSSSPSQPKKPPLALPEPQR. Residues 194-208 show a composition bias toward polar residues; that stretch reads NNINNRTPNKRSNSP. The span at 219 to 228 shows a compositional bias: low complexity; that stretch reads LLKRSSSPSQ.

It belongs to the ABI family. Binds SCAR.

The protein localises to the cytoplasm. It is found in the cytoskeleton. Involved in regulation of actin and microtubule organization. Part of a WAVE complex that activates the Arp2/3 complex. This Arabidopsis thaliana (Mouse-ear cress) protein is Protein ABIL4 (ABIL4).